We begin with the raw amino-acid sequence, 211 residues long: MFIYYINMKTEKTNYIEILIIKLIFFILTPIKIIFFIAKKIIKNPIIYRFIFKYLLYMQNKIIIINNKEYFYRIPKKKEYWEWFSAKPLYVNGKLINEIKTKEQRINFSLGKMIIKESESLTELEYVLLDLFWFGPFQMKYQNILRQNDIIIKKGVKNIKKIFQENNKFKGINLIFQKTDICKIYSGKFYTYERITEDNILLIYVFIKNKD.

This sequence belongs to the A.longa ORF167/ORF288 family.

It is found in the plastid. This is an uncharacterized protein from Euglena longa (Euglenophycean alga).